The following is a 661-amino-acid chain: 1-deoxy-D-xylulose-5-phosphate synthase (661 aa).

Residues His98 and 139–141 (AHS) contribute to the thiamine diphosphate site. Asp170 contacts Mg(2+). Residues 171–172 (GA), Asn199, Tyr309, and Glu391 each bind thiamine diphosphate. Mg(2+) is bound at residue Asn199.

This sequence belongs to the transketolase family. DXPS subfamily. In terms of assembly, homodimer. Requires Mg(2+) as cofactor. The cofactor is thiamine diphosphate.

The catalysed reaction is D-glyceraldehyde 3-phosphate + pyruvate + H(+) = 1-deoxy-D-xylulose 5-phosphate + CO2. Its pathway is metabolic intermediate biosynthesis; 1-deoxy-D-xylulose 5-phosphate biosynthesis; 1-deoxy-D-xylulose 5-phosphate from D-glyceraldehyde 3-phosphate and pyruvate: step 1/1. Its function is as follows. Catalyzes the acyloin condensation reaction between C atoms 2 and 3 of pyruvate and glyceraldehyde 3-phosphate to yield 1-deoxy-D-xylulose-5-phosphate (DXP). The chain is 1-deoxy-D-xylulose-5-phosphate synthase from Bradyrhizobium diazoefficiens (strain JCM 10833 / BCRC 13528 / IAM 13628 / NBRC 14792 / USDA 110).